We begin with the raw amino-acid sequence, 491 residues long: Cytochrome P450 2F2 (491 aa).

Cysteine 436 contributes to the heme binding site.

The protein belongs to the cytochrome P450 family. Requires heme as cofactor.

The protein localises to the endoplasmic reticulum membrane. It localises to the microsome membrane. Its function is as follows. Involved in the regio- and stereoselective transformation of naphthalene to trans-1R-hydroxy-2R-glutathionyl-1,2-dihydronaphthalene in the presence of glutathione and glutathione S-transferases. It specifically catalyzes the production of a very reactive and potentially toxic intermediate, the 2R,2S arene oxide, that is associated with necrosis of the unciliated bronchiolar epithelial cells or club cells in lung. This Rattus norvegicus (Rat) protein is Cytochrome P450 2F2 (Cyp2f2).